A 150-amino-acid chain; its full sequence is MKGIAVFLVFIFCWTTSTLSSFWQFQRMVKHITGRSAFFSYYGYGCYCGLGGRGIPVDATDRCCWAHDCCYHKLKEYGCQPILNAYQFAIVNGTVTCGCTMGGGCLCGQKACECDKLSVYCFKENLATYEKTFKQLFPTRPQCGRDKLHC.

An N-terminal signal peptide occupies residues 1–20; sequence MKGIAVFLVFIFCWTTSTLS. Cystine bridges form between cysteine 46–cysteine 143, cysteine 48–cysteine 64, cysteine 63–cysteine 121, cysteine 69–cysteine 150, cysteine 70–cysteine 114, cysteine 79–cysteine 107, cysteine 97–cysteine 112, and cysteine 99–cysteine 105. Residues tyrosine 47, glycine 49, and glycine 51 each coordinate Ca(2+). Histidine 67 is a catalytic residue. Residue aspartate 68 participates in Ca(2+) binding. A glycan (N-linked (GlcNAc...) asparagine) is linked at asparagine 92. The active site involves aspartate 115.

The protein belongs to the phospholipase A2 family. Ca(2+) is required as a cofactor.

Its subcellular location is the secreted. It catalyses the reaction a 1,2-diacyl-sn-glycero-3-phosphocholine + H2O = a 1-acyl-sn-glycero-3-phosphocholine + a fatty acid + H(+). Functionally, PA2 catalyzes the calcium-dependent hydrolysis of the 2-acyl groups in 3-sn-phosphoglycerides. The polypeptide is Group IIC secretory phospholipase A2 (Pla2g2c) (Rattus norvegicus (Rat)).